A 75-amino-acid polypeptide reads, in one-letter code: DNA-directed RNA polymerase subunit omega (75 aa).

The protein belongs to the RNA polymerase subunit omega family. In terms of assembly, in cyanobacteria the RNAP catalytic core is composed of 2 alpha, 1 beta, 1 beta', 1 gamma and 1 omega subunit. When a sigma factor is associated with the core the holoenzyme is formed, which can initiate transcription.

The catalysed reaction is RNA(n) + a ribonucleoside 5'-triphosphate = RNA(n+1) + diphosphate. Its function is as follows. Promotes RNA polymerase assembly. Latches the N- and C-terminal regions of the beta' subunit thereby facilitating its interaction with the beta and alpha subunits. The protein is DNA-directed RNA polymerase subunit omega of Picosynechococcus sp. (strain ATCC 27264 / PCC 7002 / PR-6) (Agmenellum quadruplicatum).